We begin with the raw amino-acid sequence, 358 residues long: MIFMEIETFLKKSLKNKIDFDDALYLYNNFSAIDLLYLAFKIKNRIKNNSKIKLCAIINAKSGKCKEDCIFCSQSIYSKCNIPIYPLKSKKEILEYAKKIIDECSKISSSIERGTLIGAESPNLMDVGYPNRGFPLWVERFSIVTSGKKINDDEFIEIVEAIELIKEETNLKVCCSLGLLDREKLKELKKLDVRIHNNLEASKNYFKNICSTHSYEDKVKVIKEAKKLDLEVCSGGIFGLGESVEERIKMAFELKELGVDSVPINILHPIEGTKAYEKIKNGEIKPISVSDALKLIALYKIIMPYAEIRLAGGRIYNLRDFQSYALMVLDGLMVGNYLTTKGRCLEDDLKMIADFHSL.

In terms of domain architecture, Radical SAM core spans 47-306 (KNNSKIKLCA…ALYKIIMPYA (260 aa)). [4Fe-4S] cluster is bound by residues Cys-65, Cys-69, and Cys-72. Positions 142, 174, 233, and 309 each coordinate [2Fe-2S] cluster.

It belongs to the radical SAM superfamily. Biotin synthase family. As to quaternary structure, homodimer. [4Fe-4S] cluster is required as a cofactor. The cofactor is [2Fe-2S] cluster.

The enzyme catalyses (4R,5S)-dethiobiotin + (sulfur carrier)-SH + 2 reduced [2Fe-2S]-[ferredoxin] + 2 S-adenosyl-L-methionine = (sulfur carrier)-H + biotin + 2 5'-deoxyadenosine + 2 L-methionine + 2 oxidized [2Fe-2S]-[ferredoxin]. The protein operates within cofactor biosynthesis; biotin biosynthesis; biotin from 7,8-diaminononanoate: step 2/2. In terms of biological role, catalyzes the conversion of dethiobiotin (DTB) to biotin by the insertion of a sulfur atom into dethiobiotin via a radical-based mechanism. In Methanocaldococcus jannaschii (strain ATCC 43067 / DSM 2661 / JAL-1 / JCM 10045 / NBRC 100440) (Methanococcus jannaschii), this protein is Biotin synthase.